Here is a 190-residue protein sequence, read N- to C-terminus: Cytoplasmic envelopment protein 3 (190 aa).

Residue Gly2 is the site of N-myristoyl glycine; by host attachment. Residues Gly14–Phe190 are disordered. Over residues Ser30–Ser43 the composition is skewed to polar residues. The span at Asp44–Glu58 shows a compositional bias: acidic residues. Residues Ser80–Lys90 show a composition bias toward basic and acidic residues. Residues Lys108 to Gln123 show a composition bias toward basic residues. Acidic residues predominate over residues Glu130–Thr139.

Belongs to the herpesviridae cytoplasmic envelopment protein 3 family. Interacts with cytoplasmic envelopment protein 2; this interaction is essential for the proper localization of each protein to the assembly complex and thus for the production of infectious virus. Post-translationally, myristoylation and palmitoylation (probably on one or more of the nearby cysteines at the N-terminus) enable membrane-binding and Golgi apparatus-specific targeting and are essential for efficient packaging. In terms of processing, phosphorylated. Phosphorylation does not seem to be required for recycling to the host Golgi apparatus. Packaging is selective for underphosphorylated forms.

Its subcellular location is the virion tegument. The protein localises to the virion membrane. It is found in the host cell membrane. It localises to the host Golgi apparatus membrane. In terms of biological role, plays an important role in the cytoplasmic envelopment of tegument proteins and capsids during the assembly and egress processes. Also participates in viral entry at the fusion step probably by regulating the core fusion machinery. In Human cytomegalovirus (strain Merlin) (HHV-5), this protein is Cytoplasmic envelopment protein 3 (UL99).